Reading from the N-terminus, the 792-residue chain is Ribosome biogenesis protein BOP1 homolog (792 aa).

Positions Met-1–Val-11 are enriched in basic residues. A disordered region spans residues Met-1–Ile-167. 4 stretches are compositionally biased toward acidic residues: residues Glu-44–Asp-53, Ser-60–Gly-72, Glu-82–Ala-117, and Glu-157–Asp-166. 7 WD repeats span residues Gly-453–Glu-494, Asn-496–Ile-534, Thr-578–Pro-620, Lys-623–Lys-661, Thr-664–Gln-703, Leu-707–Gln-746, and Arg-762–Thr-792.

This sequence belongs to the WD repeat BOP1/ERB1 family.

It localises to the nucleus. It is found in the nucleolus. The protein resides in the nucleoplasm. Required for maturation of ribosomal RNAs and formation of the large ribosomal subunit. This Drosophila mojavensis (Fruit fly) protein is Ribosome biogenesis protein BOP1 homolog.